The chain runs to 289 residues: Polyketide biosynthesis malonyl CoA-acyl carrier protein transacylase BaeC (289 aa).

Catalysis depends on residues Ser-87 and His-193.

This sequence belongs to the FabD family.

The protein localises to the cytoplasm. The catalysed reaction is holo-[ACP] + malonyl-CoA = malonyl-[ACP] + CoA. It functions in the pathway antibiotic biosynthesis; bacillaene biosynthesis. In terms of biological role, involved in some intermediate steps for the synthesis of the antibiotic polyketide bacillaene which is involved in secondary metabolism. It catalyzes the transfer of the malonyl-CoA group to the acyl-carrier-protein AcpK (Mal-AcpK). This Bacillus velezensis (strain DSM 23117 / BGSC 10A6 / LMG 26770 / FZB42) (Bacillus amyloliquefaciens subsp. plantarum) protein is Polyketide biosynthesis malonyl CoA-acyl carrier protein transacylase BaeC (baeC).